The chain runs to 460 residues: Gastric inhibitory polypeptide receptor (460 aa).

An N-terminal signal peptide occupies residues 1 to 18; sequence MPLRLLLLLLWLWGLQWA. Over 19-134 the chain is Extracellular; sequence ETDSEGQTTT…DQTLILERLQ (116 aa). Cystine bridges form between Cys-42–Cys-66, Cys-57–Cys-99, and Cys-80–Cys-114. Asn-58, Asn-68, and Asn-73 each carry an N-linked (GlcNAc...) asparagine glycan. Residues 135 to 155 traverse the membrane as a helical segment; that stretch reads IMYTVGYSLSLTTLLLALLIL. Residues 156 to 166 are Cytoplasmic-facing; the sequence is SLFRRLHCTRN. Residues 167–185 form a helical membrane-spanning segment; the sequence is YIHMNLFTSFMLRAAAILT. Residues 186-222 lie on the Extracellular side of the membrane; sequence RDQLLPPLGPYTGDQAPTPWNQALAACRTAQIMTQYC. Residues 223–243 traverse the membrane as a helical segment; the sequence is VGANYTWLLVEGVYLHHLLVI. The Cytoplasmic segment spans residues 244 to 255; the sequence is VGRSEKGHFRCY. Residues 256 to 276 traverse the membrane as a helical segment; the sequence is LLLGWGAPALFVIPWVIVRYL. Topologically, residues 277 to 297 are extracellular; it reads RENTQCWERNEVKAIWWIIRT. A helical transmembrane segment spans residues 298–318; the sequence is PILITILINFLIFIRILGILV. At 319–337 the chain is on the cytoplasmic side; the sequence is SKLRTRQMRCPDYRLRLAR. Residues 338–358 form a helical membrane-spanning segment; sequence STLTLVPLLGVHEVVFAPVTE. The Extracellular portion of the chain corresponds to 359–370; the sequence is EQVEGSLRFAKL. A helical membrane pass occupies residues 371–391; that stretch reads AFEIFLSSFQGFLVSVLYCFI. At 392–460 the chain is on the cytoplasmic side; the sequence is NKEVQSEIRQ…PGDEVLESYC (69 aa).

This sequence belongs to the G-protein coupled receptor 2 family. In terms of assembly, may form homodimers and heterodimers with GLP1R. In terms of processing, N-glycosylation is required for cell surface expression and lengthens receptor half-life by preventing degradation in the ER.

It is found in the cell membrane. Its function is as follows. This is a receptor for GIP. The activity of this receptor is mediated by G proteins which activate adenylyl cyclase. In Mus musculus (Mouse), this protein is Gastric inhibitory polypeptide receptor (Gipr).